The primary structure comprises 82 residues: uncharacterized protein (82 aa).

Positions 1 to 20 (MMNLSPPFKSPSGSSRAGRR) are disordered.

This is an uncharacterized protein from Archaeoglobus fulgidus (strain ATCC 49558 / DSM 4304 / JCM 9628 / NBRC 100126 / VC-16).